The following is a 185-amino-acid chain: Probable chorismate pyruvate-lyase (185 aa).

Substrate contacts are provided by R75, L113, and E174.

This sequence belongs to the UbiC family.

It localises to the cytoplasm. The catalysed reaction is chorismate = 4-hydroxybenzoate + pyruvate. The protein operates within cofactor biosynthesis; ubiquinone biosynthesis. Functionally, removes the pyruvyl group from chorismate, with concomitant aromatization of the ring, to provide 4-hydroxybenzoate (4HB) for the ubiquinone pathway. The chain is Probable chorismate pyruvate-lyase from Aromatoleum aromaticum (strain DSM 19018 / LMG 30748 / EbN1) (Azoarcus sp. (strain EbN1)).